The primary structure comprises 272 residues: Alpha-tubulin N-acetyltransferase (272 aa).

The region spanning 1 to 186 (MEFRFNCHPL…NNFVVYEGFF (186 aa)) is the N-acetyltransferase domain. Residues 120 to 133 (FYVH…GLGR) and 156 to 165 (SEKLLGFLQK) each bind acetyl-CoA. The segment at 216 to 244 (TTVGEQRRSSSQTRQQVVSPPVVQQPPVG) is disordered. Over residues 224-244 (SSSQTRQQVVSPPVVQQPPVG) the composition is skewed to low complexity.

The protein belongs to the acetyltransferase ATAT1 family.

It carries out the reaction L-lysyl-[alpha-tubulin] + acetyl-CoA = N(6)-acetyl-L-lysyl-[alpha-tubulin] + CoA + H(+). In terms of biological role, specifically acetylates 'Lys-40' in alpha-tubulin on the lumenal side of microtubules. Promotes microtubule destabilization and accelerates microtubule dynamics; this activity may be independent of acetylation activity. Acetylates alpha-tubulin with a slow enzymatic rate, due to a catalytic site that is not optimized for acetyl transfer. Enters the microtubule through each end and diffuses quickly throughout the lumen of microtubules. Acetylates only long/old microtubules because of its slow acetylation rate since it does not have time to act on dynamically unstable microtubules before the enzyme is released. This chain is Alpha-tubulin N-acetyltransferase, found in Aedes aegypti (Yellowfever mosquito).